Reading from the N-terminus, the 301-residue chain is uncharacterized protein (301 aa).

Residues glutamate 146, glutamate 148, and aspartate 177 each coordinate a divalent metal cation.

This sequence belongs to the FAH family.

This is an uncharacterized protein from Staphylococcus saprophyticus subsp. saprophyticus (strain ATCC 15305 / DSM 20229 / NCIMB 8711 / NCTC 7292 / S-41).